Consider the following 40-residue polypeptide: Alpha-conotoxin GIC (40 aa).

A propeptide spanning residues 1 to 20 (SDGRNDAAKAFDLISSTVKK) is cleaved from the precursor. 2 cysteine pairs are disulfide-bonded: Cys-22-Cys-28 and Cys-23-Cys-36. The tract at residues 24–26 (SHP) is ser-Xaa-Pro motif, crucial for potent interaction with nAChR. Cys-36 carries the cysteine amide modification.

Expressed by the venom duct.

It localises to the secreted. In terms of biological role, alpha-conotoxins bind to the nicotinic acetylcholine receptors (nAChR) and inhibit them. This toxin reversibly blocks neuronal nAChRs (alpha-3/beta-2 = alpha-6 or -3/beta-2 or -3 &gt; alpha-3/beta-4 = alpha-4/beta-2). The chain is Alpha-conotoxin GIC from Conus geographus (Geography cone).